The chain runs to 292 residues: 33 kDa chaperonin (292 aa).

2 disulfides stabilise this stretch: C230–C232 and C263–C266.

The protein belongs to the HSP33 family. Under oxidizing conditions two disulfide bonds are formed involving the reactive cysteines. Under reducing conditions zinc is bound to the reactive cysteines and the protein is inactive.

It localises to the cytoplasm. In terms of biological role, redox regulated molecular chaperone. Protects both thermally unfolding and oxidatively damaged proteins from irreversible aggregation. Plays an important role in the bacterial defense system toward oxidative stress. This chain is 33 kDa chaperonin, found in Salmonella typhimurium (strain LT2 / SGSC1412 / ATCC 700720).